A 920-amino-acid polypeptide reads, in one-letter code: Phosphoenolpyruvate carboxylase (920 aa).

Catalysis depends on residues histidine 138 and lysine 583.

This sequence belongs to the PEPCase type 1 family. The cofactor is Mg(2+).

The enzyme catalyses oxaloacetate + phosphate = phosphoenolpyruvate + hydrogencarbonate. Forms oxaloacetate, a four-carbon dicarboxylic acid source for the tricarboxylic acid cycle. The polypeptide is Phosphoenolpyruvate carboxylase (Streptococcus pyogenes serotype M1).